Here is a 430-residue protein sequence, read N- to C-terminus: MKITINQASEFVGKEVTIGAWLANKRSSGKIAFLQLRDGTGFMQGVVVKAEVGDDIFATAKALTQETSLYVTGTINEDTRSPFGYEMAVSSVEVISESHDYPITPKEHGTEFLMDHRHLWLRSNRQHAIMKIRNEIIRASYEFFNKEGFLKIDPPILTGSAPEGTTELFHTKYFEEDAFLSQSGQLYMEAAAMAFGKVFSFGPTFRAEKSKTRRHLIEFWMIEPEMAFYKLEDSLQVQENYVAFLVKAVLDNCRLELDRLGRDVSHLEKMVAPFPRITYTEAIERLHELGFDDIVWGDDFGAPHETAIADSFEKPVFITHYPKAIKPFYMPEDPENDQVVLCADMIAPEGYGEIIGGSERIHDLETLQARMEDFDLDQEAYSWYLDLARYGSVPHSGFGLGLERTVAWISGTEHVRETIPFPRLLNRLYP.

It belongs to the class-II aminoacyl-tRNA synthetase family. As to quaternary structure, homodimer.

It localises to the cytoplasm. The catalysed reaction is tRNA(Asn) + L-asparagine + ATP = L-asparaginyl-tRNA(Asn) + AMP + diphosphate + H(+). The protein is Asparagine--tRNA ligase of Listeria monocytogenes serovar 1/2a (strain ATCC BAA-679 / EGD-e).